The following is a 345-amino-acid chain: Anthranilate phosphoribosyltransferase (345 aa).

5-phospho-alpha-D-ribose 1-diphosphate is bound by residues Gly79, 82-83, Thr87, 89-92, 106-114, and Ser118; these read GD, NVST, and KHGNRAVSG. Gly79 lines the anthranilate pocket. Residue Ser91 coordinates Mg(2+). Residue Asn109 coordinates anthranilate. Arg164 lines the anthranilate pocket. Positions 223 and 224 each coordinate Mg(2+).

It belongs to the anthranilate phosphoribosyltransferase family. As to quaternary structure, homodimer. Mg(2+) is required as a cofactor.

It carries out the reaction N-(5-phospho-beta-D-ribosyl)anthranilate + diphosphate = 5-phospho-alpha-D-ribose 1-diphosphate + anthranilate. The protein operates within amino-acid biosynthesis; L-tryptophan biosynthesis; L-tryptophan from chorismate: step 2/5. Functionally, catalyzes the transfer of the phosphoribosyl group of 5-phosphorylribose-1-pyrophosphate (PRPP) to anthranilate to yield N-(5'-phosphoribosyl)-anthranilate (PRA). This is Anthranilate phosphoribosyltransferase from Sulfurisphaera tokodaii (strain DSM 16993 / JCM 10545 / NBRC 100140 / 7) (Sulfolobus tokodaii).